Here is a 172-residue protein sequence, read N- to C-terminus: Pre-intermoult gene 1 protein (172 aa).

The signal sequence occupies residues 1-22 (MKLTKLWLLFVCLGLFVTLVVS). The segment covering 25–45 (TDSDADSDSSADSDSSADSDE) has biased composition (acidic residues). Positions 25 to 172 (TDSDADSDSS…RRNNNSRRRG (148 aa)) are disordered. 3 tandem repeats follow at residues 27–32 (SDADSD), 33–38 (SSADSD), and 39–44 (SSADSD). Residues 27–44 (SDADSDSSADSDSSADSD) are 3 X 6 AA tandem repeats of S-S-A-D-S-D. A compositionally biased stretch (low complexity) spans 55-77 (TSTTESSATNSSGSSDDASGSSS). The span at 78–95 (DVDDGSDDDTDSGSDTDY) shows a compositional bias: acidic residues. Residues 104–172 (VKKRANRKKA…RRNNNSRRRG (69 aa)) show a composition bias toward basic residues.

Low expression in first to third instar larvae salivary glands.

The polypeptide is Pre-intermoult gene 1 protein (Pig1) (Drosophila melanogaster (Fruit fly)).